The primary structure comprises 141 residues: Nucleoside diphosphate kinase (141 aa).

The ATP site is built by lysine 11, phenylalanine 59, arginine 87, threonine 93, arginine 104, and asparagine 114. Residue histidine 117 is the Pros-phosphohistidine intermediate of the active site.

It belongs to the NDK family. Homotetramer. Mg(2+) serves as cofactor.

It localises to the cytoplasm. It catalyses the reaction a 2'-deoxyribonucleoside 5'-diphosphate + ATP = a 2'-deoxyribonucleoside 5'-triphosphate + ADP. The enzyme catalyses a ribonucleoside 5'-diphosphate + ATP = a ribonucleoside 5'-triphosphate + ADP. In terms of biological role, major role in the synthesis of nucleoside triphosphates other than ATP. The ATP gamma phosphate is transferred to the NDP beta phosphate via a ping-pong mechanism, using a phosphorylated active-site intermediate. This Pseudomonas syringae pv. tomato (strain ATCC BAA-871 / DC3000) protein is Nucleoside diphosphate kinase.